Reading from the N-terminus, the 697-residue chain is PHD finger protein At1g33420 (697 aa).

A PHD-type zinc finger spans residues 603 to 653 (KVDCKCGTKDDDGERMLACDGCGVWHHTRCIGINNADALPSKFLCFRCIEL).

The protein resides in the nucleus. The polypeptide is PHD finger protein At1g33420 (Arabidopsis thaliana (Mouse-ear cress)).